A 330-amino-acid polypeptide reads, in one-letter code: GMP reductase (330 aa).

C180 functions as the Thioimidate intermediate in the catalytic mechanism. 209-232 serves as a coordination point for NADP(+); the sequence is LIADGGIRHNGDIAKSVRFGASMV.

The protein belongs to the IMPDH/GMPR family. GuaC type 2 subfamily.

The enzyme catalyses IMP + NH4(+) + NADP(+) = GMP + NADPH + 2 H(+). Functionally, catalyzes the irreversible NADPH-dependent deamination of GMP to IMP. It functions in the conversion of nucleobase, nucleoside and nucleotide derivatives of G to A nucleotides, and in maintaining the intracellular balance of A and G nucleotides. This Lactobacillus gasseri (strain ATCC 33323 / DSM 20243 / BCRC 14619 / CIP 102991 / JCM 1131 / KCTC 3163 / NCIMB 11718 / NCTC 13722 / AM63) protein is GMP reductase.